A 481-amino-acid chain; its full sequence is U6 small nuclear RNA (adenine-(43)-N(6))-methyltransferase (481 aa).

Residues K82, G108, D131, T164, and N184 each contribute to the S-adenosyl-L-methionine site.

The protein belongs to the methyltransferase superfamily. METTL16/RlmF family. In terms of assembly, self-associates. Interacts with dlc-1; the interaction is direct, and is required for nuclear localization of mett-10.

It localises to the nucleus. The enzyme catalyses an adenosine in mRNA + S-adenosyl-L-methionine = an N(6)-methyladenosine in mRNA + S-adenosyl-L-homocysteine + H(+). The catalysed reaction is adenosine in U6 snRNA + S-adenosyl-L-methionine = N(6)-methyladenosine in U6 snRNA + S-adenosyl-L-homocysteine + H(+). RNA N6-methyltransferase that methylates adenosine residues at the N(6) position of a subset of RNAs and is involved in S-adenosyl-L-methionine homeostasis by regulating splicing of S-adenosylmethionine synthase transcripts (sams-3, sams-4 and sams-5). Able to N6-methylate a subset of mRNAs containing the 5'UACAGAAAC-3' nonamer sequence. Plays a key role in S-adenosyl-L-methionine homeostasis: under rich-diet conditions, catalyzes N6-methylation of S-adenosylmethionine synthase mRNAs (sams-3, sams-4 and sams-5), directly inhibiting splicing and protein production of S-adenosylmethionine synthase. In addition to mRNAs, also able to mediate N6-methylation of U6 small nuclear RNA (U6 snRNA). Required for gamete production, inhibiting germ cell proliferative fate and ensuring germ cell meiotic development. Also promotes progression of the mitotic cell cycle in those germ cells that continue to proliferate. Plays a role in the development of the vulva, somatic gonad and embryo. This chain is U6 small nuclear RNA (adenine-(43)-N(6))-methyltransferase, found in Caenorhabditis briggsae.